Here is a 438-residue protein sequence, read N- to C-terminus: Actin-like protein 7A (438 aa).

A required for interaction with TES region spans residues Ala36–Pro56.

It belongs to the actin family. As to quaternary structure, interacts (via N-terminus) with TES (via LIM domain 2). Heterodimer with TES; the heterodimer interacts with ENAH to form a heterotrimer. Interacts with ACTL9. Interacts with CYLC1; the interaction may be relevant for proper acrosome attachment to the nuclear envelope.

The protein localises to the cytoplasm. It is found in the cytoskeleton. The protein resides in the golgi apparatus. It localises to the nucleus. Its function is as follows. Essential for normal spermatogenesis and male fertility. Required for normal sperm head morphology, acroplaxome formation, acrosome attachment, and acrosome granule stability. May anchor and stabilize acrosomal adherence to the acroplaxome at least in part by facilitating the presence of F-actin in the subacrosomal space. May play an important role in formation and fusion of Golgi-derived vesicles during acrosome biogenesis. In Bos taurus (Bovine), this protein is Actin-like protein 7A (ACTL7A).